The following is a 143-amino-acid chain: Small ribosomal subunit protein bS18 (143 aa).

Residues 1-72 (MARPDMGGPK…RGGEEGGRRG (72 aa)) form a disordered region. The span at 10–50 (KSSGGFGGPRSGGGFGGGGYGGGGGGGGGYGGGGGGGFGGR) shows a compositional bias: gly residues. Basic and acidic residues predominate over residues 51 to 70 (GGDRGDRGDRDDRGGEEGGR).

This sequence belongs to the bacterial ribosomal protein bS18 family. As to quaternary structure, part of the 30S ribosomal subunit. Forms a tight heterodimer with protein bS6.

Functionally, binds as a heterodimer with protein bS6 to the central domain of the 16S rRNA, where it helps stabilize the platform of the 30S subunit. The sequence is that of Small ribosomal subunit protein bS18 from Anaeromyxobacter sp. (strain Fw109-5).